Consider the following 177-residue polypeptide: Ribulose bisphosphate carboxylase small subunit, chloroplastic 2 (177 aa).

Residues 1–56 (MASSMMASTAAVARAGPAQSNMVAPFNGLRSSVAFPATRKANKNLSTLPSNGGKVS) constitute a chloroplast transit peptide.

The protein belongs to the RuBisCO small chain family. As to quaternary structure, heterohexadecamer of 8 large and 8 small subunits.

The protein resides in the plastid. Its subcellular location is the chloroplast. In terms of biological role, ruBisCO catalyzes two reactions: the carboxylation of D-ribulose 1,5-bisphosphate, the primary event in carbon dioxide fixation, as well as the oxidative fragmentation of the pentose substrate. Both reactions occur simultaneously and in competition at the same active site. Although the small subunit is not catalytic it is essential for maximal activity. This chain is Ribulose bisphosphate carboxylase small subunit, chloroplastic 2, found in Lemna gibba (Swollen duckweed).